Reading from the N-terminus, the 349-residue chain is Uroporphyrinogen decarboxylase (349 aa).

Substrate contacts are provided by residues 23–27, Asp71, Tyr148, Ser203, and His317; that span reads RQAGR.

Belongs to the uroporphyrinogen decarboxylase family. As to quaternary structure, homodimer.

The protein localises to the cytoplasm. The enzyme catalyses uroporphyrinogen III + 4 H(+) = coproporphyrinogen III + 4 CO2. It participates in porphyrin-containing compound metabolism; protoporphyrin-IX biosynthesis; coproporphyrinogen-III from 5-aminolevulinate: step 4/4. Catalyzes the decarboxylation of four acetate groups of uroporphyrinogen-III to yield coproporphyrinogen-III. This is Uroporphyrinogen decarboxylase from Sorangium cellulosum (strain So ce56) (Polyangium cellulosum (strain So ce56)).